The following is a 292-amino-acid chain: Universal stress protein Mb2346c (292 aa).

This sequence belongs to the universal stress protein A family.

This Mycobacterium bovis (strain ATCC BAA-935 / AF2122/97) protein is Universal stress protein Mb2346c.